The primary structure comprises 720 residues: Proline-rich receptor-like protein kinase PERK12 (720 aa).

The tract at residues 1 to 240 is disordered; the sequence is MSDLGESPSS…GNGDGGGGGG (240 aa). Topologically, residues 1 to 246 are extracellular; it reads MSDLGESPSS…GGGGGYQGKT (246 aa). Residues 10–25 are compositionally biased toward pro residues; sequence SSPPAPPADTAPPPET. A compositionally biased stretch (low complexity) spans 26-35; the sequence is PSENSALPPV. Pro residues-rich tracts occupy residues 52 to 84 and 92 to 116; these read LSEP…PSDS and PSPP…PAPP. Residue N117 is glycosylated (N-linked (GlcNAc...) asparagine). Pro residues-rich tracts occupy residues 123 to 138 and 147 to 207; these read NPPP…PSSP and PESP…PPKT. The chain crosses the membrane as a helical span at residues 247–267; the sequence is MVGMAVAGFAIMALIGVVFLV. Residues 268–720 are Cytoplasmic-facing; that stretch reads RRKKKRNIDS…ETRPFNNRRF (453 aa). Residues 300 to 349 form a disordered region; it reads QDPGKGYSSGPNGSMYNNSQQQQSSMGNSYGTAGGGYPHHQMQSSGTPDS. Low complexity predominate over residues 311–330; the sequence is NGSMYNNSQQQQSSMGNSYG. The region spanning 371 to 624 is the Protein kinase domain; sequence FARKNILGEG…EVFRMIETAA (254 aa). Residues 377 to 385 and K399 each bind ATP; that span reads LGEGGFGCV. At Y444 the chain carries Phosphotyrosine. D495 (proton acceptor) is an active-site residue. A Phosphoserine modification is found at S528. A phosphothreonine mark is found at T529 and T534. Y542 is subject to Phosphotyrosine. The interval 698–720 is disordered; the sequence is SAKSSSDFSGNESETRPFNNRRF.

It belongs to the protein kinase superfamily. Ser/Thr protein kinase family. In terms of tissue distribution, mostly expressed in apical parts, including flower buds, and particularly in anthers. Also present in root hairs.

It is found in the cell membrane. It carries out the reaction L-seryl-[protein] + ATP = O-phospho-L-seryl-[protein] + ADP + H(+). The enzyme catalyses L-threonyl-[protein] + ATP = O-phospho-L-threonyl-[protein] + ADP + H(+). Its function is as follows. Regulates the auxin-related MAX (More Axillary Growth) pathway during the shoot branching. The protein is Proline-rich receptor-like protein kinase PERK12 (PERK12) of Arabidopsis thaliana (Mouse-ear cress).